We begin with the raw amino-acid sequence, 1419 residues long: Multidrug resistance protein 1 (1419 aa).

Residues 1-37 form a r domain; regulates transporter activity region; the sequence is MGKEQKEKKDGNLSIKEEVEKELNKKSTAELFRKIKN. Over 1-60 the chain is Cytoplasmic; sequence MGKEQKEKKDGNLSIKEEVEKELNKKSTAELFRKIKNEKISFFLPFKCLPAQHRKLLFIS. In terms of domain architecture, ABC transmembrane type-1 1 spans 58–345; sequence FISFVCAVLS…ILPNITEYMK (288 aa). A helical membrane pass occupies residues 61-81; it reads FVCAVLSGGTLPFFISVFGVI. Over 82-90 the chain is Vacuolar; that stretch reads LKNMNLGDD. Residues 91 to 111 traverse the membrane as a helical segment; sequence INPIILSLVSIGLVQFILSMI. Over 112–168 the chain is Cytoplasmic; sequence SSYCMDVITSKILKTLKLEYLRSVFYQDGQFHDNNPGSKLRSDLDFYLEQVSSGIGT. The chain crosses the membrane as a helical span at residues 169–189; the sequence is KFITIFTYASSFLGLYIWSLI. Over 190–191 the chain is Vacuolar; sequence KN. The chain crosses the membrane as a helical span at residues 192 to 212; it reads ARLTLCITCVFPLIYVCGVIC. At 213-275 the chain is on the cytoplasmic side; sequence NKKVKLNKKT…KYILKANFVE (63 aa). A helical transmembrane segment spans residues 276 to 296; that stretch reads ALHIGLINGLILVSYAFGFWY. The Vacuolar portion of the chain corresponds to 297–316; that stretch reads GTRIIINSATNQYPNNDFNG. The helical transmembrane segment at 317-337 threads the bilayer; that stretch reads ASVISILLGVLISMFMLTIIL. Residues 338-788 lie on the Cytoplasmic side of the membrane; that stretch reads PNITEYMKAL…YKEIFSYKKD (451 aa). Residues 378-662 form the ABC transporter 1 domain; the sequence is IEFKNVRFHY…NNNNNNNNNK (285 aa). ATP contacts are provided by Tyr387, Thr389, Arg390, Ser415, Cys417, Gly418, Lys419, Ser420, Thr421, Gln462, Lys562, Ser564, Gly566, and Gln567. Gln462 contributes to the Mg(2+) binding site. 2 disordered regions span residues 639-665 and 697-752; these read ERSDNNNNNNNDDNNNNNNNNNNKINN and SSNK…TAEN. Low complexity-rich tracts occupy residues 643–665 and 697–715; these read NNNNNNNDDNNNNNNNNNNKINN and SSNKSSNNGNDNGSDNKSS. Over residues 723-749 the composition is skewed to polar residues; it reads GNDADNMNSLSIHENENISNNRNCKNT. The helical transmembrane segment at 789–809 threads the bilayer; the sequence is VTIIFFSILVAGGLYPVFALL. The ABC transmembrane type-1 2 domain maps to 791-1083; that stretch reads IIFFSILVAG…GSYAGKLMSL (293 aa). Topologically, residues 810–829 are vacuolar; it reads YARYVSTLFDFANLEYNSNK. A helical transmembrane segment spans residues 830–850; the sequence is YSIYILLIAIAMFISETLKNY. Topologically, residues 851 to 907 are cytoplasmic; that stretch reads YNNKIGEKVEKTMKRRLFENILYQEMSFFDQDKNTPGVLSAHINRDVHLLKTGLVNN. 2 helical membrane-spanning segments follow: residues 908-928 and 929-949; these read IVIFSHFIMLFLVSMVMSFYF and CPIVAAVLTFIYFINMRVFAV. Residues 950-1032 lie on the Cytoplasmic side of the membrane; that stretch reads RARLTKSKEI…RIIVNAALWG (83 aa). A helical membrane pass occupies residues 1033–1053; it reads FSQSAQLFINSFAYWFGSFLI. Topologically, residues 1054–1057 are vacuolar; the sequence is KRGT. The helical transmembrane segment at 1058–1078 threads the bilayer; sequence ILVDDFMKSLFTFIFTGSYAG. Topologically, residues 1079-1419 are cytoplasmic; sequence KLMSLKGDSE…IYKKYVKLAK (341 aa). The 291-residue stretch at 1126–1416 folds into the ABC transporter 2 domain; it reads VDIKDVNFRY…QDGIYKKYVK (291 aa). Residues Tyr1135, Arg1138, Thr1163, Gly1164, Gly1166, Lys1167, Ser1168, Thr1169, Gln1256, Leu1312, Ser1313, Gly1315, and Gln1316 each contribute to the ATP site. Ser1168 is a Mg(2+) binding site. A Mg(2+)-binding site is contributed by Gln1256.

Belongs to the ABC transporter superfamily. ABCB family. Multidrug resistance exporter (TC 3.A.1.201) subfamily.

The protein resides in the vacuole membrane. It carries out the reaction ATP + H2O + xenobioticSide 1 = ADP + phosphate + xenobioticSide 2.. In terms of biological role, energy-dependent efflux pump responsible for decreased drug accumulation in multidrug-resistant cells. Transports lumefantrine, mefloquine, chloroquine, quinine, quinidine, amodiaquine, piperaquine, dihydroartemisinin and quinacrine. The sequence is that of Multidrug resistance protein 1 from Plasmodium falciparum (isolate 3D7).